The chain runs to 214 residues: Cdc42 effector protein 2 (214 aa).

The residue at position 2 (Ser2) is an N-acetylserine. Residues 30–44 (ISPPLGDFRHTIHIG) form the CRIB domain. A phosphoserine mark is found at Ser31, Ser101, Ser137, Ser141, and Ser145. The segment at 118–151 (ALTLPTTQAPPKPPRLHLESPQPSPKSSPQEAGN) is disordered.

This sequence belongs to the BORG/CEP family. Interacts with CDC42 and RHOQ, in a GTP-dependent manner, and with SEPT7.

It is found in the endomembrane system. The protein resides in the cytoplasm. It localises to the cytoskeleton. Probably involved in the organization of the actin cytoskeleton. May act downstream of CDC42 to induce actin filament assembly leading to cell shape changes. Induces pseudopodia formation in fibroblasts in a CDC42-dependent manner. The sequence is that of Cdc42 effector protein 2 (Cdc42ep2) from Rattus norvegicus (Rat).